The primary structure comprises 409 residues: Dihydroorotase (409 aa).

Positions 57 and 59 each coordinate Zn(2+). Substrate is bound by residues 59-61 (HLR) and Asn91. Positions 139, 168, 208, and 276 each coordinate Zn(2+). Lys139 bears the N6-carboxylysine mark. The active site involves Asp276. Substrate is bound by residues His280 and 290 to 291 (AG).

The protein belongs to the metallo-dependent hydrolases superfamily. DHOase family. Class I DHOase subfamily. The cofactor is Zn(2+).

It carries out the reaction (S)-dihydroorotate + H2O = N-carbamoyl-L-aspartate + H(+). Its pathway is pyrimidine metabolism; UMP biosynthesis via de novo pathway; (S)-dihydroorotate from bicarbonate: step 3/3. In terms of biological role, catalyzes the reversible cyclization of carbamoyl aspartate to dihydroorotate. This Thermococcus kodakarensis (strain ATCC BAA-918 / JCM 12380 / KOD1) (Pyrococcus kodakaraensis (strain KOD1)) protein is Dihydroorotase.